The chain runs to 480 residues: Major capsid protein (480 aa).

The protein localises to the virion. Functionally, major protein of the capsid. This is Major capsid protein (MCP-1) from Trichoplusia ni ascovirus 2c (TnAV-2c).